The chain runs to 143 residues: Large ribosomal subunit protein uL15 (143 aa).

Positions 1 to 54 (MELNSIKPADGAKHAARRVGRGIGSGLGKTAGRGHKGQKSRSGGYHKVGFEGGQ) are disordered. Over residues 21-31 (RGIGSGLGKTA) the composition is skewed to gly residues.

It belongs to the universal ribosomal protein uL15 family. Part of the 50S ribosomal subunit.

In terms of biological role, binds to the 23S rRNA. The polypeptide is Large ribosomal subunit protein uL15 (Acidovorax ebreus (strain TPSY) (Diaphorobacter sp. (strain TPSY))).